The chain runs to 308 residues: MSEITAAMVKELREKTGAGMMDCKKALAETAGDMEAAIDWLRAKGIAKADKKSGRTAAEGLIGVSSQGTKAVVVEVNSETDFVARNDAFQELVRGIAKVAVSTDGTVDAVAAATYPASGKSVSDTIKDAIATIGENMNLRRSVALSVEDGVVATYIHNAVSDGLGKLGVLVALKSTGDKEALNAIGRQVAMHIAATAPLAIRPEEVDAAVAERERNVFIEQSRASGKPDNIIEKMVDGRMRKFFEEVALLSQAFVINPDLTVAAAIKEAEKAVGAPIEVAGMARLLLGEGVEKEETDFAAEVAAAVKG.

An involved in Mg(2+) ion dislocation from EF-Tu region spans residues 80-83 (TDFV).

It belongs to the EF-Ts family.

The protein resides in the cytoplasm. Functionally, associates with the EF-Tu.GDP complex and induces the exchange of GDP to GTP. It remains bound to the aminoacyl-tRNA.EF-Tu.GTP complex up to the GTP hydrolysis stage on the ribosome. The chain is Elongation factor Ts from Rhizobium johnstonii (strain DSM 114642 / LMG 32736 / 3841) (Rhizobium leguminosarum bv. viciae).